The primary structure comprises 1604 residues: Ubiquitin carboxyl-terminal hydrolase 32 (1604 aa).

3 EF-hand domains span residues 91 to 126, 228 to 263, and 264 to 299; these read KDEE…VDGK, IRPS…CCRG, and PLAE…LLEV. D241, N243, D245, H247, E252, D277, D279, D281, and E288 together coordinate Ca(2+). The DUSP domain maps to 369-585; that stretch reads ATPEEEGQII…ANLALPRPVI (217 aa). A USP domain is found at 734–1567; the sequence is TGLSNLGNTC…SAYILFYEQQ (834 aa). C743 serves as the catalytic Nucleophile. At Y1173 the chain carries Phosphotyrosine. 2 disordered regions span residues 1343-1362 and 1367-1431; these read KKVD…SKSP and ANII…DASK. Residues S1350, S1372, S1376, and S1454 each carry the phosphoserine modification. Low complexity predominate over residues 1367–1399; sequence ANIISSPKGSPSSSRKSGTSCPSSKNSSPNSSP. Residue H1526 is the Proton acceptor of the active site. S1588 is modified (phosphoserine). At C1601 the chain carries Cysteine methyl ester. A lipid anchor (S-farnesyl cysteine) is attached at C1601. Positions 1602–1604 are cleaved as a propeptide — removed in mature form; it reads VLQ.

Belongs to the peptidase C19 family.

It is found in the golgi apparatus membrane. The catalysed reaction is Thiol-dependent hydrolysis of ester, thioester, amide, peptide and isopeptide bonds formed by the C-terminal Gly of ubiquitin (a 76-residue protein attached to proteins as an intracellular targeting signal).. Its function is as follows. Deubiquitinase that can remove conjugated ubiquitin from target proteins, such as RAB7A and LAMTOR1. Acts as a positive regulator of the mTORC1 signaling by mediating deubiquitination of LAMTOR1, thereby promoting the association between LAMTOR1 and the lysosomal V-ATPase complex and subsequent activation of the mTORC1 complex. In Homo sapiens (Human), this protein is Ubiquitin carboxyl-terminal hydrolase 32 (USP32).